Consider the following 206-residue polypeptide: Small ribosomal subunit protein uS4 (206 aa).

Positions 96-156 (CRLDNVVYRM…EKAKNQLRIV (61 aa)) constitute an S4 RNA-binding domain.

It belongs to the universal ribosomal protein uS4 family. As to quaternary structure, part of the 30S ribosomal subunit. Contacts protein S5. The interaction surface between S4 and S5 is involved in control of translational fidelity.

Its function is as follows. One of the primary rRNA binding proteins, it binds directly to 16S rRNA where it nucleates assembly of the body of the 30S subunit. Functionally, with S5 and S12 plays an important role in translational accuracy. The polypeptide is Small ribosomal subunit protein uS4 (Pseudomonas savastanoi pv. phaseolicola (strain 1448A / Race 6) (Pseudomonas syringae pv. phaseolicola (strain 1448A / Race 6))).